Reading from the N-terminus, the 165-residue chain is Ribosome maturation factor RimM (165 aa).

The region spanning E89–W161 is the PRC barrel domain.

The protein belongs to the RimM family. As to quaternary structure, binds ribosomal protein uS19.

Its subcellular location is the cytoplasm. Functionally, an accessory protein needed during the final step in the assembly of 30S ribosomal subunit, possibly for assembly of the head region. Essential for efficient processing of 16S rRNA. May be needed both before and after RbfA during the maturation of 16S rRNA. It has affinity for free ribosomal 30S subunits but not for 70S ribosomes. This is Ribosome maturation factor RimM from Clostridium botulinum (strain Alaska E43 / Type E3).